Consider the following 137-residue polypeptide: Large-conductance mechanosensitive channel (137 aa).

2 consecutive transmembrane segments (helical) span residues 10–30 (FAMR…AAFG) and 76–96 (GVFI…FMAI).

Belongs to the MscL family. Homopentamer.

It is found in the cell inner membrane. Functionally, channel that opens in response to stretch forces in the membrane lipid bilayer. May participate in the regulation of osmotic pressure changes within the cell. This is Large-conductance mechanosensitive channel from Escherichia coli O45:K1 (strain S88 / ExPEC).